Reading from the N-terminus, the 136-residue chain is Large ribosomal subunit protein uL16c (136 aa).

The interval 1–20 is disordered; sequence MLSPKRTKFRKQHRGRMKGK.

Belongs to the universal ribosomal protein uL16 family. Part of the 50S ribosomal subunit.

Its subcellular location is the plastid. The protein localises to the chloroplast. In Brachypodium distachyon (Purple false brome), this protein is Large ribosomal subunit protein uL16c.